Consider the following 480-residue polypeptide: EGF-like repeat and discoidin I-like domain-containing protein 3 (480 aa).

Residues 1–23 form the signal peptide; that stretch reads MKHLVAAWLLVGLSLGVPQFGKG. Residues 24–60 enclose the EGF-like 1 domain; it reads DICNPNPCENGGICLSGLADDSFSCECPEGFAGPNCS. Disulfide bonds link Cys-26–Cys-37, Cys-31–Cys-48, and Cys-50–Cys-59. An O-linked (GalNAc...) threonine glycan is attached at Thr-73. 2 EGF-like domains span residues 74–117 and 119–155; these read SAGP…IHCQ and NINE…RNCQ. Disulfide bonds link Cys-78–Cys-89, Cys-83–Cys-105, and Cys-107–Cys-116. A glycan (O-linked (Fuc...) threonine) is linked at Thr-88. Residues 96 to 98 carry the Cell attachment site motif; sequence RGD. 3 residues coordinate Ca(2+): Asn-119, Ile-120, and Glu-122. Cystine bridges form between Cys-123–Cys-134, Cys-128–Cys-143, Cys-145–Cys-154, Cys-158–Cys-314, Cys-301–Cys-305, and Cys-319–Cys-476. Asp-136 and Leu-137 together coordinate Ca(2+). Asn-140 carries N-linked (GlcNAc...) asparagine glycosylation. F5/8 type C domains lie at 158-314 and 319-476; these read CSGP…LLGC and CSEP…LLGC.

In terms of tissue distribution, expressed in angioblasts and early endothelial cells. By embryonic day 13.5, also expressed in a restricted group of non-endothelial cells including chondrocytes and retinal neurons.

The protein localises to the secreted. Its function is as follows. Promotes adhesion of endothelial cells through interaction with the alpha-v/beta-3 integrin receptor. Inhibits formation of vascular-like structures. May be involved in regulation of vascular morphogenesis of remodeling in embryonic development. The sequence is that of EGF-like repeat and discoidin I-like domain-containing protein 3 (Edil3) from Mus musculus (Mouse).